The primary structure comprises 302 residues: Glycine--tRNA ligase alpha subunit (302 aa).

This sequence belongs to the class-II aminoacyl-tRNA synthetase family. Tetramer of two alpha and two beta subunits.

The protein resides in the cytoplasm. The enzyme catalyses tRNA(Gly) + glycine + ATP = glycyl-tRNA(Gly) + AMP + diphosphate. This chain is Glycine--tRNA ligase alpha subunit, found in Haemophilus influenzae (strain PittGG).